A 328-amino-acid polypeptide reads, in one-letter code: Tetraacyldisaccharide 4'-kinase (328 aa).

Residue 55–62 (TAGGNGKT) coordinates ATP.

The protein belongs to the LpxK family.

The enzyme catalyses a lipid A disaccharide + ATP = a lipid IVA + ADP + H(+). It participates in glycolipid biosynthesis; lipid IV(A) biosynthesis; lipid IV(A) from (3R)-3-hydroxytetradecanoyl-[acyl-carrier-protein] and UDP-N-acetyl-alpha-D-glucosamine: step 6/6. Its function is as follows. Transfers the gamma-phosphate of ATP to the 4'-position of a tetraacyldisaccharide 1-phosphate intermediate (termed DS-1-P) to form tetraacyldisaccharide 1,4'-bis-phosphate (lipid IVA). In Shigella boydii serotype 4 (strain Sb227), this protein is Tetraacyldisaccharide 4'-kinase.